The following is a 24-amino-acid chain: 12 kDa protein (24 aa).

The protein is 12 kDa protein of Mycolicibacterium smegmatis (Mycobacterium smegmatis).